The chain runs to 106 residues: UPF0145 protein CPF_0876 (106 aa).

This sequence belongs to the UPF0145 family.

In Clostridium perfringens (strain ATCC 13124 / DSM 756 / JCM 1290 / NCIMB 6125 / NCTC 8237 / Type A), this protein is UPF0145 protein CPF_0876.